We begin with the raw amino-acid sequence, 381 residues long: MQPGAALQAMLLAVLLAKPRDSKGRLLSASDLDPRGGQLVCRGGTRRPCYKVIYFHDAFQRLNFEEAKETCMEDGGQLVSIETEDEQRLIEKFIENLLASDGDFWIGLKRLEEKQSNNTACQDLYAWTDGSTSQFRNWYVDEPSCGSEVCVVMYHQPSAPPGIGGSYMFQWNDDRCNMKNNFICKYHDDKPSTTPSIWPGGEATEPATPLLPEETQKEDTKETFKERREAALNLAYILIPSIPLFLLLVVTSAVCWVWICRRKREQTDPSTKEQHTIWPTPRQENSPNLDVYNVIRKQSEADLAEPRPDLKNISFRVCSGEAMPDDMSCDYENIAVNPSESGFVTLASMESGFVTNDIYEFSPDRMGRSKESGWVENEIYY.

Residues 1–24 (MQPGAALQAMLLAVLLAKPRDSKG) form the signal peptide. At 25–235 (RLLSASDLDP…ERREAALNLA (211 aa)) the chain is on the extracellular side. The 141-residue stretch at 45 to 185 (TRRPCYKVIY…CNMKNNFICK (141 aa)) folds into the C-type lectin domain. Disulfide bonds link C71/C184 and C150/C176. N-linked (GlcNAc...) asparagine glycosylation occurs at N117. A helical membrane pass occupies residues 236-256 (YILIPSIPLFLLLVVTSAVCW). The Cytoplasmic portion of the chain corresponds to 257-381 (VWICRRKREQ…SGWVENEIYY (125 aa)). 2 positions are modified to phosphoserine: S286 and S299. Positions 330–374 (DYENIAVNPSESGFVTLASMESGFVTNDIYEFSPDRMGRSKESGW) are interaction with NF2. Residues 337-381 (NPSESGFVTLASMESGFVTNDIYEFSPDRMGRSKESGWVENEIYY) are interaction with TLN1. 5 consecutive repeat copies span residues 340–344 (ESGFV), 350–354 (ESGFV), 356–359 (NDIY), 371–375 (ESGWV), and 377–380 (NEIY). Residues 340 to 375 (ESGFVTLASMESGFVTNDIYEFSPDRMGRSKESGWV) form a 3 X 5 AA repeats of E-S-G-X-V region. The segment at 356–380 (NDIYEFSPDRMGRSKESGWVENEIY) is 2 X 4 AA repeats of N-X-I-Y.

Interacts with TLN1. Interacts with NF2 and RDX.

It localises to the membrane. In terms of biological role, receptor for hyaluronate. This chain is Layilin (Layn), found in Mus musculus (Mouse).